The following is a 342-amino-acid chain: S-adenosylmethionine:tRNA ribosyltransferase-isomerase (342 aa).

This sequence belongs to the QueA family. As to quaternary structure, monomer.

The protein resides in the cytoplasm. The catalysed reaction is 7-aminomethyl-7-carbaguanosine(34) in tRNA + S-adenosyl-L-methionine = epoxyqueuosine(34) in tRNA + adenine + L-methionine + 2 H(+). The protein operates within tRNA modification; tRNA-queuosine biosynthesis. In terms of biological role, transfers and isomerizes the ribose moiety from AdoMet to the 7-aminomethyl group of 7-deazaguanine (preQ1-tRNA) to give epoxyqueuosine (oQ-tRNA). The sequence is that of S-adenosylmethionine:tRNA ribosyltransferase-isomerase from Streptococcus pyogenes serotype M6 (strain ATCC BAA-946 / MGAS10394).